The chain runs to 142 residues: Small ribosomal subunit protein bS6 (142 aa).

Basic and acidic residues predominate over residues 110 to 133 (NKKPSHAKEKHEKTEHTHSHHAEE). Residues 110-142 (NKKPSHAKEKHEKTEHTHSHHAEEAESVGSHSE) are disordered.

This sequence belongs to the bacterial ribosomal protein bS6 family.

Binds together with bS18 to 16S ribosomal RNA. The protein is Small ribosomal subunit protein bS6 of Helicobacter pylori (strain P12).